The sequence spans 147 residues: Small ribosomal subunit protein uS5 (147 aa).

In terms of domain architecture, S5 DRBM spans 9 to 72 (FEEVIVDIGR…DDAFKNIIHV (64 aa)).

It belongs to the universal ribosomal protein uS5 family. In terms of assembly, part of the 30S ribosomal subunit. Contacts proteins S4 and S8.

In terms of biological role, with S4 and S12 plays an important role in translational accuracy. Functionally, located at the back of the 30S subunit body where it stabilizes the conformation of the head with respect to the body. In Campylobacter curvus (strain 525.92), this protein is Small ribosomal subunit protein uS5.